Consider the following 471-residue polypeptide: Bifunctional protein GlmU (471 aa).

A pyrophosphorylase region spans residues 1–235 (MVAVAILAAG…YQEIFGINNR (235 aa)). UDP-N-acetyl-alpha-D-glucosamine-binding positions include 7–10 (LAAG), lysine 21, glutamine 82, and 87–88 (GT). Residue aspartate 112 participates in Mg(2+) binding. 4 residues coordinate UDP-N-acetyl-alpha-D-glucosamine: glycine 149, glutamate 164, asparagine 179, and asparagine 233. Position 233 (asparagine 233) interacts with Mg(2+). Residues 236 to 256 (KHLAKAHEILQVRVKDDWMEA) are linker. The interval 257 to 471 (GVTLIDPDSI…SKKEENKSSP (215 aa)) is N-acetyltransferase. The UDP-N-acetyl-alpha-D-glucosamine site is built by arginine 338 and lysine 356. Histidine 368 (proton acceptor) is an active-site residue. The UDP-N-acetyl-alpha-D-glucosamine site is built by tyrosine 371 and asparagine 382. Residues alanine 385, 391–392 (NY), serine 410, alanine 428, and arginine 445 each bind acetyl-CoA.

This sequence in the N-terminal section; belongs to the N-acetylglucosamine-1-phosphate uridyltransferase family. It in the C-terminal section; belongs to the transferase hexapeptide repeat family. As to quaternary structure, homotrimer. The cofactor is Mg(2+).

The protein localises to the cytoplasm. The catalysed reaction is alpha-D-glucosamine 1-phosphate + acetyl-CoA = N-acetyl-alpha-D-glucosamine 1-phosphate + CoA + H(+). It catalyses the reaction N-acetyl-alpha-D-glucosamine 1-phosphate + UTP + H(+) = UDP-N-acetyl-alpha-D-glucosamine + diphosphate. The protein operates within nucleotide-sugar biosynthesis; UDP-N-acetyl-alpha-D-glucosamine biosynthesis; N-acetyl-alpha-D-glucosamine 1-phosphate from alpha-D-glucosamine 6-phosphate (route II): step 2/2. Its pathway is nucleotide-sugar biosynthesis; UDP-N-acetyl-alpha-D-glucosamine biosynthesis; UDP-N-acetyl-alpha-D-glucosamine from N-acetyl-alpha-D-glucosamine 1-phosphate: step 1/1. It participates in bacterial outer membrane biogenesis; LPS lipid A biosynthesis. Functionally, catalyzes the last two sequential reactions in the de novo biosynthetic pathway for UDP-N-acetylglucosamine (UDP-GlcNAc). The C-terminal domain catalyzes the transfer of acetyl group from acetyl coenzyme A to glucosamine-1-phosphate (GlcN-1-P) to produce N-acetylglucosamine-1-phosphate (GlcNAc-1-P), which is converted into UDP-GlcNAc by the transfer of uridine 5-monophosphate (from uridine 5-triphosphate), a reaction catalyzed by the N-terminal domain. This Trichodesmium erythraeum (strain IMS101) protein is Bifunctional protein GlmU.